Consider the following 214-residue polypeptide: Oocyte zinc finger protein XlCOF10 (214 aa).

C2H2-type zinc fingers lie at residues 1–23 (FSCS…RQLH), 29–51 (FTCS…HRIH), 57–79 (FTCD…QKSH), 85–107 (FCCS…QRTH), 113–135 (FTCT…QKSH), 141–163 (FSCS…QRIH), and 169–191 (FSCS…EKCH).

This sequence belongs to the krueppel C2H2-type zinc-finger protein family.

It localises to the nucleus. In terms of biological role, may be involved in transcriptional regulation. The protein is Oocyte zinc finger protein XlCOF10 of Xenopus laevis (African clawed frog).